A 408-amino-acid polypeptide reads, in one-letter code: Lupus La protein (408 aa).

The HTH La-type RNA-binding domain maps to 7–99 (NEKMAALEAK…RRSPSKPLPE (93 aa)). 2 positions are modified to phosphoserine: Ser92 and Ser94. Residues 111 to 187 (RSVYIKGFPT…TDLLILFKDD (77 aa)) form the RRM domain. An N6-acetyllysine modification is found at Lys116. Residue Thr120 is modified to Phosphothreonine. An N6-acetyllysine modification is found at Lys128. Phosphoserine is present on Ser225. One can recognise a xRRM domain in the interval 227–348 (EEKIGCLLKF…KGKGNKAAQP (122 aa)). N6-acetyllysine is present on residues Lys328, Lys341, and Lys360. A compositionally biased stretch (basic residues) spans 329 to 342 (WKSKGRRFKGKGKG). Residues 329 to 408 (WKSKGRRFKG…QKTENGAGDQ (80 aa)) are disordered. Thr362 is subject to Phosphothreonine. Ser366 is modified (phosphoserine; by CK2). Over residues 384–395 (RAREETDKEEPA) the composition is skewed to basic and acidic residues.

As to quaternary structure, interacts with DDX15. May interact with RUFY1. In terms of processing, phosphorylated. The phosphorylation sites are at the C-terminal part of the protein. Post-translationally, the N-terminus is blocked.

It is found in the nucleus. In terms of biological role, binds to the 3' poly(U) terminus of nascent RNA polymerase III transcripts, protecting them from exonuclease digestion and facilitating their folding and maturation. In case of Coxsackievirus B3 infection, binds to the viral internal ribosome entry site (IRES) and stimulates the IRES-mediated translation. This chain is Lupus La protein (SSB), found in Homo sapiens (Human).